The primary structure comprises 450 residues: Cyclin-A2-3 (450 aa).

Disordered regions lie at residues Ala-18–Lys-53 and Asn-75–Ala-94. Residues Glu-23–Val-34 show a composition bias toward polar residues.

Belongs to the cyclin family. Cyclin AB subfamily. Interacts with CDKA-1. Interacts with SAMBA.

It is found in the nucleus. Functionally, negatively regulates endocycles and acts as a regulator of ploidy levels in endoreduplication. Promotes divisions in the guard cells (GCs) after the guard mother cells (GMC) symmetric division. In Arabidopsis thaliana (Mouse-ear cress), this protein is Cyclin-A2-3 (CYCA2-3).